Reading from the N-terminus, the 432-residue chain is Probable exopolygalacturonase C (432 aa).

Positions 1 to 20 are cleaved as a signal peptide; the sequence is MPISKGIFLSLLSTLPLALA. Asparagine 33, asparagine 73, asparagine 90, and asparagine 140 each carry an N-linked (GlcNAc...) asparagine glycan. 2 PbH1 repeats span residues 206–227 and 229–250; these read GTNI…AVGS and SHDI…SIGS. The Proton donor role is filled by aspartate 220. The active site involves histidine 244. Residue asparagine 260 is glycosylated (N-linked (GlcNAc...) asparagine). One copy of the PbH1 3 repeat lies at 261–282; that stretch reads ITNLRFEDVTVIDALYAARFKS. Asparagine 292 and asparagine 302 each carry an N-linked (GlcNAc...) asparagine glycan. Cysteine 377 and cysteine 383 are disulfide-bonded. Asparagine 407 is a glycosylation site (N-linked (GlcNAc...) asparagine).

Belongs to the glycosyl hydrolase 28 family.

It localises to the secreted. The catalysed reaction is [(1-&gt;4)-alpha-D-galacturonosyl](n) + H2O = alpha-D-galacturonate + [(1-&gt;4)-alpha-D-galacturonosyl](n-1). Specific in hydrolyzing the terminal glycosidic bond of polygalacturonic acid and oligogalacturonates. The protein is Probable exopolygalacturonase C (pgxC) of Aspergillus terreus (strain NIH 2624 / FGSC A1156).